Reading from the N-terminus, the 181-residue chain is MALTKARKAERIETLAKELEHSTSAIIGTFAKLTVSQDFELRQKVRAAGGRYRVVKNKLAARASKGTQIEAALQGLKGVSSVAYTSGDPVALAKAMADWVKENAEFTFKLGIVDGKVITVEEVDQLAKMPGKEEIFSKLLYLINAPAQRLATVMAATGRDLAVVINQGVEKGKFSGEQASA.

It belongs to the universal ribosomal protein uL10 family. As to quaternary structure, part of the ribosomal stalk of the 50S ribosomal subunit. The N-terminus interacts with L11 and the large rRNA to form the base of the stalk. The C-terminus forms an elongated spine to which L12 dimers bind in a sequential fashion forming a multimeric L10(L12)X complex.

Functionally, forms part of the ribosomal stalk, playing a central role in the interaction of the ribosome with GTP-bound translation factors. This chain is Large ribosomal subunit protein uL10, found in Acidobacterium capsulatum (strain ATCC 51196 / DSM 11244 / BCRC 80197 / JCM 7670 / NBRC 15755 / NCIMB 13165 / 161).